The sequence spans 321 residues: Torsin-2A (321 aa).

The first 26 residues, 1–26 (MAVARHGYRPWGSILGLLGLALAAAA), serve as a signal peptide directing secretion. 93–100 (GWTGTGKS) provides a ligand contact to ATP. A glycan (N-linked (GlcNAc...) asparagine) is linked at Asn149.

Belongs to the ClpA/ClpB family. Torsin subfamily. As to quaternary structure, homohexamer. Interacts with TOR1AIP1. N-glycosylated. In terms of tissue distribution, expressed at similar levels in liver, muscle and brain (at protein level).

It is found in the endoplasmic reticulum lumen. The chain is Torsin-2A (Tor2a) from Mus musculus (Mouse).